An 874-amino-acid chain; its full sequence is Alanine--tRNA ligase (874 aa).

Zn(2+) contacts are provided by histidine 562, histidine 566, cysteine 664, and histidine 668.

It belongs to the class-II aminoacyl-tRNA synthetase family. The cofactor is Zn(2+).

Its subcellular location is the cytoplasm. The catalysed reaction is tRNA(Ala) + L-alanine + ATP = L-alanyl-tRNA(Ala) + AMP + diphosphate. Functionally, catalyzes the attachment of alanine to tRNA(Ala) in a two-step reaction: alanine is first activated by ATP to form Ala-AMP and then transferred to the acceptor end of tRNA(Ala). Also edits incorrectly charged Ser-tRNA(Ala) and Gly-tRNA(Ala) via its editing domain. The protein is Alanine--tRNA ligase of Shewanella halifaxensis (strain HAW-EB4).